Reading from the N-terminus, the 92-residue chain is YcgL domain-containing protein Shewana3_2381 (92 aa).

Positions M1 to R85 constitute a YcgL domain.

The sequence is that of YcgL domain-containing protein Shewana3_2381 from Shewanella sp. (strain ANA-3).